Here is a 212-residue protein sequence, read N- to C-terminus: 3-isopropylmalate dehydratase small subunit (212 aa).

The protein belongs to the LeuD family. LeuD type 1 subfamily. In terms of assembly, heterodimer of LeuC and LeuD.

The catalysed reaction is (2R,3S)-3-isopropylmalate = (2S)-2-isopropylmalate. The protein operates within amino-acid biosynthesis; L-leucine biosynthesis; L-leucine from 3-methyl-2-oxobutanoate: step 2/4. Functionally, catalyzes the isomerization between 2-isopropylmalate and 3-isopropylmalate, via the formation of 2-isopropylmaleate. This Methylococcus capsulatus (strain ATCC 33009 / NCIMB 11132 / Bath) protein is 3-isopropylmalate dehydratase small subunit.